A 173-amino-acid chain; its full sequence is Transmembrane protein 278 (173 aa).

A compositionally biased stretch (acidic residues) spans 1–14 (MSEQERETEEDEGV). Residues 1 to 25 (MSEQERETEEDEGVASDTAPMLPRR) are disordered. 3 consecutive transmembrane segments (helical) span residues 31–51 (HISV…VLSG), 53–73 (ALVG…LVLL), and 107–127 (AALI…AAAA). The segment at 141 to 165 (DPARTPAPRRPPRSSGDLADGHPDE) is disordered.

Belongs to the TMEM88 family.

It localises to the membrane. This Mus musculus (Mouse) protein is Transmembrane protein 278 (Tmem278).